The following is a 218-amino-acid chain: Peptide methionine sulfoxide reductase MsrA (218 aa).

Cysteine 54 is an active-site residue.

This sequence belongs to the MsrA Met sulfoxide reductase family.

It catalyses the reaction L-methionyl-[protein] + [thioredoxin]-disulfide + H2O = L-methionyl-(S)-S-oxide-[protein] + [thioredoxin]-dithiol. The catalysed reaction is [thioredoxin]-disulfide + L-methionine + H2O = L-methionine (S)-S-oxide + [thioredoxin]-dithiol. Has an important function as a repair enzyme for proteins that have been inactivated by oxidation. Catalyzes the reversible oxidation-reduction of methionine sulfoxide in proteins to methionine. The protein is Peptide methionine sulfoxide reductase MsrA of Azorhizobium caulinodans (strain ATCC 43989 / DSM 5975 / JCM 20966 / LMG 6465 / NBRC 14845 / NCIMB 13405 / ORS 571).